Consider the following 181-residue polypeptide: Shikimate kinase 2 (181 aa).

Position 12 to 17 (12 to 17) interacts with ATP; the sequence is GCGKTT. Residues Thr16 and Asp32 each contribute to the Mg(2+) site. Substrate contacts are provided by Asp34, Arg58, and Gly79. The LID domain stretch occupies residues 112 to 126; the sequence is EAEPEADLRPTLTGK. Arg120 is an ATP binding site. Arg139 serves as a coordination point for substrate.

This sequence belongs to the shikimate kinase family. AroL subfamily. In terms of assembly, monomer. Mg(2+) is required as a cofactor.

The protein resides in the cytoplasm. The catalysed reaction is shikimate + ATP = 3-phosphoshikimate + ADP + H(+). It participates in metabolic intermediate biosynthesis; chorismate biosynthesis; chorismate from D-erythrose 4-phosphate and phosphoenolpyruvate: step 5/7. Its function is as follows. Catalyzes the specific phosphorylation of the 3-hydroxyl group of shikimic acid using ATP as a cosubstrate. This is Shikimate kinase 2 from Salmonella enteritidis PT4 (strain P125109).